A 172-amino-acid polypeptide reads, in one-letter code: Translation initiation factor IF-3 (172 aa).

This sequence belongs to the IF-3 family. Monomer.

The protein resides in the cytoplasm. IF-3 binds to the 30S ribosomal subunit and shifts the equilibrium between 70S ribosomes and their 50S and 30S subunits in favor of the free subunits, thus enhancing the availability of 30S subunits on which protein synthesis initiation begins. The polypeptide is Translation initiation factor IF-3 (Campylobacter jejuni subsp. doylei (strain ATCC BAA-1458 / RM4099 / 269.97)).